Here is a 259-residue protein sequence, read N- to C-terminus: Binding partner of ACD11 1 (259 aa).

Residues 6–77 (RSVKVGNLSS…QSVIIELAPN (72 aa)) form the RRM domain. Residues 219–259 (GEVGQKTKEKVEAEQPSQPAQSQQQLPEGYSPIHSSEYSKN) form a disordered region. Residues 232-243 (EQPSQPAQSQQQ) are compositionally biased toward low complexity.

Interacts with ACD11, PR1F2 and PR1F3.

It is found in the cytoplasm. It localises to the membrane. In Arabidopsis thaliana (Mouse-ear cress), this protein is Binding partner of ACD11 1 (BPA1).